Reading from the N-terminus, the 354-residue chain is Dihydroflavonol 4-reductase (354 aa).

Residues Lys44 and Tyr163 each coordinate NADP(+).

The protein belongs to the NAD(P)-dependent epimerase/dehydratase family. Dihydroflavonol-4-reductase subfamily.

The enzyme catalyses a (2R,3S,4S)-leucoanthocyanidin + NADP(+) = a (2R,3R)-dihydroflavonol + NADPH + H(+). The catalysed reaction is (2S)-flavan-4-ol + NADP(+) = (2S)-flavanone + NADPH + H(+). The protein operates within pigment biosynthesis; anthocyanin biosynthesis. Functionally, bifunctional enzyme involved in flavonoid metabolism. This Hordeum vulgare (Barley) protein is Dihydroflavonol 4-reductase (ANT18).